A 480-amino-acid polypeptide reads, in one-letter code: uncharacterized protein (480 aa).

The PUA domain maps to 131-207; sequence KKIIKIKNDV…KVVKVRFFIK (77 aa).

In the C-terminal section; belongs to the PAPS reductase family.

This is an uncharacterized protein from Methanocaldococcus jannaschii (strain ATCC 43067 / DSM 2661 / JAL-1 / JCM 10045 / NBRC 100440) (Methanococcus jannaschii).